The following is a 466-amino-acid chain: Glucose-6-phosphate 1-dehydrogenase 1 (466 aa).

Residues serine 48, 88-89 (DV), and lysine 141 each bind NADP(+). Histidine 171, lysine 175, glutamate 209, and aspartate 228 together coordinate substrate. The Proton acceptor role is filled by histidine 233. Residues lysine 319 and lysine 324 each contribute to the substrate site.

It belongs to the glucose-6-phosphate dehydrogenase family.

It carries out the reaction D-glucose 6-phosphate + NADP(+) = 6-phospho-D-glucono-1,5-lactone + NADPH + H(+). It functions in the pathway carbohydrate degradation; pentose phosphate pathway; D-ribulose 5-phosphate from D-glucose 6-phosphate (oxidative stage): step 1/3. In terms of biological role, catalyzes the oxidation of glucose 6-phosphate to 6-phosphogluconolactone. The protein is Glucose-6-phosphate 1-dehydrogenase 1 of Mycobacterium tuberculosis (strain ATCC 25618 / H37Rv).